A 114-amino-acid chain; its full sequence is Ribosome-binding factor A (114 aa).

This sequence belongs to the RbfA family. In terms of assembly, monomer. Binds 30S ribosomal subunits, but not 50S ribosomal subunits or 70S ribosomes.

The protein localises to the cytoplasm. Its function is as follows. One of several proteins that assist in the late maturation steps of the functional core of the 30S ribosomal subunit. Associates with free 30S ribosomal subunits (but not with 30S subunits that are part of 70S ribosomes or polysomes). Required for efficient processing of 16S rRNA. May interact with the 5'-terminal helix region of 16S rRNA. This chain is Ribosome-binding factor A, found in Listeria monocytogenes serotype 4b (strain F2365).